Consider the following 599-residue polypeptide: Elongation factor 4 (599 aa).

Residues K2–E184 form the tr-type G domain. Residues D14–T19 and N131–D134 each bind GTP.

It belongs to the TRAFAC class translation factor GTPase superfamily. Classic translation factor GTPase family. LepA subfamily.

The protein resides in the cell inner membrane. It carries out the reaction GTP + H2O = GDP + phosphate + H(+). Required for accurate and efficient protein synthesis under certain stress conditions. May act as a fidelity factor of the translation reaction, by catalyzing a one-codon backward translocation of tRNAs on improperly translocated ribosomes. Back-translocation proceeds from a post-translocation (POST) complex to a pre-translocation (PRE) complex, thus giving elongation factor G a second chance to translocate the tRNAs correctly. Binds to ribosomes in a GTP-dependent manner. The polypeptide is Elongation factor 4 (Escherichia fergusonii (strain ATCC 35469 / DSM 13698 / CCUG 18766 / IAM 14443 / JCM 21226 / LMG 7866 / NBRC 102419 / NCTC 12128 / CDC 0568-73)).